The following is a 504-amino-acid chain: ATP synthase subunit alpha (504 aa).

169 to 176 lines the ATP pocket; that stretch reads GDRQIGKT.

It belongs to the ATPase alpha/beta chains family. In terms of assembly, F-type ATPases have 2 components, CF(1) - the catalytic core - and CF(0) - the membrane proton channel. CF(1) has five subunits: alpha(3), beta(3), gamma(1), delta(1), epsilon(1). CF(0) has three main subunits: a(1), b(2) and c(9-12). The alpha and beta chains form an alternating ring which encloses part of the gamma chain. CF(1) is attached to CF(0) by a central stalk formed by the gamma and epsilon chains, while a peripheral stalk is formed by the delta and b chains.

It is found in the cell membrane. The catalysed reaction is ATP + H2O + 4 H(+)(in) = ADP + phosphate + 5 H(+)(out). Produces ATP from ADP in the presence of a proton gradient across the membrane. The alpha chain is a regulatory subunit. In Syntrophomonas wolfei subsp. wolfei (strain DSM 2245B / Goettingen), this protein is ATP synthase subunit alpha.